Here is a 584-residue protein sequence, read N- to C-terminus: Probable pectinesterase/pectinesterase inhibitor (584 aa).

A signal peptide spans 1–22; it reads MAVGKIVISVASMLLVVGVAIG. Positions 40–191 are pectinesterase inhibitor; sequence NSHQKAVESL…KILSSNAIDI (152 aa). N-linked (GlcNAc...) asparagine glycosylation is found at asparagine 91 and asparagine 105. The interval 246–267 is disordered; sequence AQAGRPGAPADEGIGEGGGGGG. Residues 272–571 form a pectinesterase region; sequence THVVAKDGSG…TVANWLTPAN (300 aa). Threonine 349 and glutamine 379 together coordinate substrate. The active-site Proton donor; for pectinesterase activity is aspartate 402. Catalysis depends on aspartate 423, which acts as the Nucleophile; for pectinesterase activity. 2 residues coordinate substrate: arginine 492 and tryptophan 494.

The protein in the N-terminal section; belongs to the PMEI family. In the C-terminal section; belongs to the pectinesterase family. Pollen, and at much lower levels in pistils and petals.

The protein resides in the secreted. Its subcellular location is the cell wall. It catalyses the reaction [(1-&gt;4)-alpha-D-galacturonosyl methyl ester](n) + n H2O = [(1-&gt;4)-alpha-D-galacturonosyl](n) + n methanol + n H(+). The protein operates within glycan metabolism; pectin degradation; 2-dehydro-3-deoxy-D-gluconate from pectin: step 1/5. Acts in the modification of cell walls via demethylesterification of cell wall pectin. This is Probable pectinesterase/pectinesterase inhibitor (BP19) from Brassica napus (Rape).